Reading from the N-terminus, the 281-residue chain is Energy-coupling factor transporter ATP-binding protein EcfA1 (281 aa).

The 237-residue stretch at 6-242 folds into the ABC transporter domain; the sequence is IDVKHLDYRY…GEALIKMGLD (237 aa). 42-49 contacts ATP; the sequence is GHNGSGKS.

Belongs to the ABC transporter superfamily. Energy-coupling factor EcfA family. Forms a stable energy-coupling factor (ECF) transporter complex composed of 2 membrane-embedded substrate-binding proteins (S component), 2 ATP-binding proteins (A component) and 2 transmembrane proteins (T component).

The protein localises to the cell membrane. Its function is as follows. ATP-binding (A) component of a common energy-coupling factor (ECF) ABC-transporter complex. Unlike classic ABC transporters this ECF transporter provides the energy necessary to transport a number of different substrates. In Lactiplantibacillus plantarum (strain ATCC BAA-793 / NCIMB 8826 / WCFS1) (Lactobacillus plantarum), this protein is Energy-coupling factor transporter ATP-binding protein EcfA1.